The following is a 208-amino-acid chain: Proheparin-binding EGF-like growth factor (208 aa).

The N-terminal stretch at 1-23 (MKLLPSVMLKLFLAAVLSALVTG) is a signal peptide. Positions 24 to 62 (ESLERLRRGLAAATSNPDPPTGSTNQLLPTGGDRAQGVQ) are excised as a propeptide. At 24 to 160 (ESLERLRRGL…ENPLYTYDHT (137 aa)) the chain is on the extracellular side. Disordered regions lie at residues 35–57 (AATSNPDPPTGSTNQLLPTGGDR) and 80–104 (PQGLATPSKERNGKKKKKGKGLGKK). Polar residues predominate over residues 36-51 (ATSNPDPPTGSTNQLL). O-linked (GalNAc...) threonine glycosylation is present at threonine 85. Basic residues predominate over residues 91–102 (NGKKKKKGKGLG). Residues 104 to 144 (KRDPCLRKYKDYCIHGECRYLQEFRTPSCKCLPGYHGHRCH) form the EGF-like domain. Disulfide bonds link cysteine 108–cysteine 121, cysteine 116–cysteine 132, and cysteine 134–cysteine 143. Positions 149–208 (PVENPLYTYDHTTVLAVVAVVLSSVCLLVIVGLLMFRYHRRGGYDLESEEKVKLGVASSH) are cleaved as a propeptide — C-terminal. The helical transmembrane segment at 161–184 (TVLAVVAVVLSSVCLLVIVGLLMF) threads the bilayer. The Cytoplasmic segment spans residues 185–208 (RYHRRGGYDLESEEKVKLGVASSH).

In terms of assembly, interacts with FBLN1. Interacts with EGFR and ERBB4. O-glycosylated. Most abundant in kidney, skeletal muscle, lung, spleen, brain and heart.

It is found in the secreted. It localises to the extracellular space. The protein resides in the cell membrane. Functionally, growth factor that mediates its effects via EGFR, ERBB2 and ERBB4. Required for normal cardiac valve formation and normal heart function. Promotes smooth muscle cell proliferation. May be involved in macrophage-mediated cellular proliferation. It is mitogenic for fibroblasts, but not endothelial cells. It is able to bind EGF receptor/EGFR with higher affinity than EGF itself and is a far more potent mitogen for smooth muscle cells than EGF. Also acts as a diphtheria toxin receptor. The sequence is that of Proheparin-binding EGF-like growth factor (Hbegf) from Mus musculus (Mouse).